The sequence spans 543 residues: CTP synthase (543 aa).

Positions 1-265 (MTRYIFVTGG…DDFVVERFGL (265 aa)) are amidoligase domain. Position 13 (Ser-13) interacts with CTP. Ser-13 is a binding site for UTP. Residues 14-19 (SLGKGI) and Asp-71 contribute to the ATP site. Mg(2+) contacts are provided by Asp-71 and Glu-139. CTP-binding positions include 146–148 (DIE), 186–191 (KTKPTQ), and Lys-222. UTP-binding positions include 186-191 (KTKPTQ) and Lys-222. In terms of domain architecture, Glutamine amidotransferase type-1 spans 290–541 (TIAMVGKYME…VKAALAQHQK (252 aa)). An L-glutamine-binding site is contributed by Gly-351. Cys-378 functions as the Nucleophile; for glutamine hydrolysis in the catalytic mechanism. L-glutamine is bound by residues 379–382 (LGMQ), Glu-402, and Arg-469. Catalysis depends on residues His-514 and Glu-516.

This sequence belongs to the CTP synthase family. As to quaternary structure, homotetramer.

The enzyme catalyses UTP + L-glutamine + ATP + H2O = CTP + L-glutamate + ADP + phosphate + 2 H(+). It catalyses the reaction L-glutamine + H2O = L-glutamate + NH4(+). It carries out the reaction UTP + NH4(+) + ATP = CTP + ADP + phosphate + 2 H(+). It participates in pyrimidine metabolism; CTP biosynthesis via de novo pathway; CTP from UDP: step 2/2. Its activity is regulated as follows. Allosterically activated by GTP, when glutamine is the substrate; GTP has no effect on the reaction when ammonia is the substrate. The allosteric effector GTP functions by stabilizing the protein conformation that binds the tetrahedral intermediate(s) formed during glutamine hydrolysis. Inhibited by the product CTP, via allosteric rather than competitive inhibition. Catalyzes the ATP-dependent amination of UTP to CTP with either L-glutamine or ammonia as the source of nitrogen. Regulates intracellular CTP levels through interactions with the four ribonucleotide triphosphates. The polypeptide is CTP synthase (Pseudomonas savastanoi pv. phaseolicola (strain 1448A / Race 6) (Pseudomonas syringae pv. phaseolicola (strain 1448A / Race 6))).